The sequence spans 359 residues: Ribosome biogenesis protein BRX1 homolog (359 aa).

A compositionally biased stretch (basic residues) spans 1 to 12 (MGRKFQNKKKKA). A disordered region spans residues 1 to 42 (MGRKFQNKKKKAAPQLEIVPLDENPPLPPQRSSDDVVPKKAR). The Brix domain occupies 50 to 241 (QRVLVFSARG…PVKIFDGSFT (192 aa)).

The protein belongs to the BRX1 family.

It localises to the nucleus. Its subcellular location is the nucleolus. In terms of biological role, required for biogenesis of the 60S ribosomal subunit. The polypeptide is Ribosome biogenesis protein BRX1 homolog (Drosophila melanogaster (Fruit fly)).